The sequence spans 549 residues: Glucose-6-phosphate isomerase 1 (549 aa).

The Proton donor role is filled by E358. Catalysis depends on residues H389 and K513.

This sequence belongs to the GPI family.

The protein resides in the cytoplasm. The catalysed reaction is alpha-D-glucose 6-phosphate = beta-D-fructose 6-phosphate. The protein operates within carbohydrate biosynthesis; gluconeogenesis. It functions in the pathway carbohydrate degradation; glycolysis; D-glyceraldehyde 3-phosphate and glycerone phosphate from D-glucose: step 2/4. Its function is as follows. Catalyzes the reversible isomerization of glucose-6-phosphate to fructose-6-phosphate. This chain is Glucose-6-phosphate isomerase 1, found in Streptomyces avermitilis (strain ATCC 31267 / DSM 46492 / JCM 5070 / NBRC 14893 / NCIMB 12804 / NRRL 8165 / MA-4680).